Here is a 423-residue protein sequence, read N- to C-terminus: G protein-activated inward rectifier potassium channel 2 (423 aa).

At 1–89 (MAKLTESMTN…IFTTLVDLKW (89 aa)) the chain is on the cytoplasmic side. Residues S16 and S23 each carry the phosphoserine modification. Residues 90–114 (RFNLLIFVMVYTVTWLFFGMIWWLI) form a helical membrane-spanning segment. The Extracellular portion of the chain corresponds to 115-138 (AYIRGDMDHIEDPSWTPCVTNLNG). Residues 139–150 (FVSAFLFSIETE) constitute an intramembrane region (helical; Pore-forming). The pore-forming intramembrane region spans 151-157 (TTIGYGY). Residues 152–157 (TIGYGY) carry the Selectivity filter motif. At 158–166 (RVITDKCPE) the chain is on the extracellular side. A helical membrane pass occupies residues 167–188 (GIILLLIQSVLGSIVNAFMVGC). The Cytoplasmic segment spans residues 189–423 (MFVKISQPKK…VANLENESKV (235 aa)). A disordered region spans residues 390-423 (NQHAELETEEEEKNLEEQTERNGDVANLENESKV). The PDZ-binding signature appears at 420–423 (ESKV).

Belongs to the inward rectifier-type potassium channel (TC 1.A.2.1) family. KCNJ6 subfamily. In terms of assembly, associates with KCNJ3/GIRK1 or KCNJ5/GRIK4 to form a G-protein-activated heteromultimer pore-forming unit. The resulting inward current is much larger. Interacts (via PDZ-binding motif) with SNX27 (via PDZ domain); the interaction is required when endocytosed to prevent degradation in lysosomes and promote recycling to the plasma membrane.

The protein resides in the membrane. The enzyme catalyses K(+)(in) = K(+)(out). Its activity is regulated as follows. Activated by phosphatidylinositol 4,5 biphosphate (PtdIns(4,5)P2). Its function is as follows. Inward rectifier potassium channels are characterized by a greater tendency to allow potassium to flow into the cell rather than out of it. Their voltage dependence is regulated by the concentration of extracellular potassium; as external potassium is raised, the voltage range of the channel opening shifts to more positive voltages. The inward rectification is mainly due to the blockage of outward current by internal magnesium. This potassium channel may be involved in the regulation of insulin secretion by glucose and/or neurotransmitters acting through G-protein-coupled receptors. This is G protein-activated inward rectifier potassium channel 2 (KCNJ6) from Pongo abelii (Sumatran orangutan).